Reading from the N-terminus, the 270-residue chain is Tryptophan synthase alpha chain (270 aa).

Active-site proton acceptor residues include Glu49 and Asp60.

It belongs to the TrpA family. As to quaternary structure, tetramer of two alpha and two beta chains.

It carries out the reaction (1S,2R)-1-C-(indol-3-yl)glycerol 3-phosphate + L-serine = D-glyceraldehyde 3-phosphate + L-tryptophan + H2O. It participates in amino-acid biosynthesis; L-tryptophan biosynthesis; L-tryptophan from chorismate: step 5/5. Its function is as follows. The alpha subunit is responsible for the aldol cleavage of indoleglycerol phosphate to indole and glyceraldehyde 3-phosphate. In Buchnera aphidicola subsp. Diuraphis noxia, this protein is Tryptophan synthase alpha chain.